Consider the following 529-residue polypeptide: Zinc metalloproteinase MspA (529 aa).

Residues 1–24 (MHHNYYLSPLAVALALGMVSPAKA) form the signal peptide. Residues 25-204 (ADPILLQNAS…PFVQWNDIKT (180 aa)) constitute a propeptide that is removed on maturation. His-365 provides a ligand contact to Zn(2+). Residue Glu-366 is part of the active site. 2 residues coordinate Zn(2+): His-369 and Glu-389. His-451 (proton donor) is an active-site residue.

This sequence belongs to the peptidase M4 family. Zn(2+) serves as cofactor.

This chain is Zinc metalloproteinase MspA (mspA), found in Legionella longbeachae.